Consider the following 258-residue polypeptide: F-box/SPRY domain-containing protein 1 (258 aa).

The region spanning 6 to 54 (MEYAPNIPDNVLELIFSFLKLQDLRNCTLVCKSWYRFFCDENNEVWRAQ) is the F-box domain. The B30.2/SPRY domain maps to 64–256 (FKNDLLTVVP…ISMVYLGAPL (193 aa)).

This sequence belongs to the FBXO45/Fsn family. Component of an E3 ubiquitin ligase complex composed of hiw and Fsn.

The protein localises to the synapse. It participates in protein modification; protein ubiquitination. Its function is as follows. Required in the presynaptic motoneuron to down-regulate the levels of wnd and restrain synaptic terminal growth at the neuromuscular junction (NMJ). The chain is F-box/SPRY domain-containing protein 1 from Anopheles gambiae (African malaria mosquito).